The following is a 356-amino-acid chain: Tyrosinase P (356 aa).

An N-terminal signal peptide occupies residues 1–19; the sequence is MGFYRNLVLVAASCTQALG. Asn-81 carries N-linked (GlcNAc...) asparagine glycosylation. 2 residues coordinate Cu cation: His-87 and His-96. 2 N-linked (GlcNAc...) asparagine glycosylation sites follow: Asn-148 and Asn-193. Position 203 (His-203) interacts with Cu cation. Asn-226 carries N-linked (GlcNAc...) asparagine glycosylation. Cu cation-binding residues include His-263 and His-286. N-linked (GlcNAc...) asparagine glycosylation is present at Asn-309.

Belongs to the tyrosinase family. Cu(2+) is required as a cofactor. Glycosylated.

It is found in the endoplasmic reticulum lumen. It localises to the golgi apparatus lumen. It carries out the reaction aspulvinone E + O2 = (5Z)-3-(3,4-dihydroxyphenyl)-5-[(3,4-dihydroxyphenyl)methylidene]-5-oxo-2,5-dihydrofuran-3-olate. The enzyme catalyses aspulvinone E + O2 = (2Z)-2-[(3,4-dioxocyclohexa-1,5-dien-1-yl)methylidene]-4-(4-hydroxyphenyl)-5-oxo-2,5-dihydrofuran-3-olate + H2O. Its activity is regulated as follows. Activity is inhibited by the presence of dithiothreitol (DTT). In terms of biological role, tyrosinase; part of the gene cluster that mediates the biosynthesis of Asp-melanin, a pigment that confers resistance against UV light and hampers phagocytosis by soil amoeba. The nonribosomal peptide synthase melA converts 4-hydroxyphenylpyruvate (4-HPPA) to aspulvinone E. The tyrosinase tyrP then performs hydroxylations of both aromatic moieties of aspulvinone E. The product of tyrP is highly unstable, and, due to the high reactivity of methides and ortho-diquinones, the polymeric Asp-melanin forms spontaneously. In Aspergillus terreus, this protein is Tyrosinase P (tyrP).